Here is a 212-residue protein sequence, read N- to C-terminus: Urease accessory protein UreG 2 (212 aa).

11 to 18 (GPVGSGKT) lines the GTP pocket.

The protein belongs to the SIMIBI class G3E GTPase family. UreG subfamily. Homodimer. UreD, UreF and UreG form a complex that acts as a GTP-hydrolysis-dependent molecular chaperone, activating the urease apoprotein by helping to assemble the nickel containing metallocenter of UreC. The UreE protein probably delivers the nickel.

Its subcellular location is the cytoplasm. Its function is as follows. Facilitates the functional incorporation of the urease nickel metallocenter. This process requires GTP hydrolysis, probably effectuated by UreG. This is Urease accessory protein UreG 2 from Brucella abortus (strain 2308).